The primary structure comprises 435 residues: Cyclin-dependent kinase 15 (435 aa).

Residues 103–387 form the Protein kinase domain; sequence YLNLEKLGEG…AQEALVHDYF (285 aa). Residues 109 to 117 and Lys-132 contribute to the ATP site; that span reads LGEGSYATV. Catalysis depends on Asp-224, which acts as the Proton acceptor.

It belongs to the protein kinase superfamily. CMGC Ser/Thr protein kinase family. CDC2/CDKX subfamily. Mg(2+) serves as cofactor.

The enzyme catalyses L-seryl-[protein] + ATP = O-phospho-L-seryl-[protein] + ADP + H(+). The catalysed reaction is L-threonyl-[protein] + ATP = O-phospho-L-threonyl-[protein] + ADP + H(+). Functionally, serine/threonine-protein kinase that acts like an antiapoptotic protein that counters TRAIL/TNFSF10-induced apoptosis by inducing phosphorylation of BIRC5 at 'Thr-34'. The sequence is that of Cyclin-dependent kinase 15 (CDK15) from Homo sapiens (Human).